Reading from the N-terminus, the 152-residue chain is Ribonuclease pancreatic gamma-type (152 aa).

Positions 1-25 (MGLEKSFILFSLLVLVLGCVQPSLV) are cleaved as a signal peptide. The segment at 26–48 (GESKESPSEKFKRRHMDEEGPYQ) is disordered. Positions 27 to 43 (ESKESPSEKFKRRHMDE) are enriched in basic and acidic residues. Residues Lys-35 and Arg-38 each coordinate substrate. His-40 serves as the catalytic Proton acceptor. Cystine bridges form between Cys-54-Cys-112, Cys-68-Cys-123, Cys-86-Cys-138, and Cys-93-Cys-100. Residues 69 to 73 (KPLNT) and Lys-94 contribute to the substrate site. His-147 serves as the catalytic Proton donor.

It belongs to the pancreatic ribonuclease family. As to quaternary structure, monomer.

The protein resides in the secreted. It carries out the reaction an [RNA] containing cytidine + H2O = an [RNA]-3'-cytidine-3'-phosphate + a 5'-hydroxy-ribonucleotide-3'-[RNA].. The enzyme catalyses an [RNA] containing uridine + H2O = an [RNA]-3'-uridine-3'-phosphate + a 5'-hydroxy-ribonucleotide-3'-[RNA].. Functionally, endonuclease that catalyzes the cleavage of RNA on the 3' side of pyrimidine nucleotides. Acts on single-stranded and double-stranded RNA. The polypeptide is Ribonuclease pancreatic gamma-type (Rattus fuscipes (Bush rat)).